The sequence spans 99 residues: MPAISRDEVAHLARLSRLALTDAELDEFAGQLDSILSHVKVVTEVPAEDVPPMANPNAVTNVTRPDVIVPGLTPEQALSGAPAVEQDRFAVPQILGEGE.

This sequence belongs to the GatC family. In terms of assembly, heterotrimer of A, B and C subunits.

It carries out the reaction L-glutamyl-tRNA(Gln) + L-glutamine + ATP + H2O = L-glutaminyl-tRNA(Gln) + L-glutamate + ADP + phosphate + H(+). The enzyme catalyses L-aspartyl-tRNA(Asn) + L-glutamine + ATP + H2O = L-asparaginyl-tRNA(Asn) + L-glutamate + ADP + phosphate + 2 H(+). Allows the formation of correctly charged Asn-tRNA(Asn) or Gln-tRNA(Gln) through the transamidation of misacylated Asp-tRNA(Asn) or Glu-tRNA(Gln) in organisms which lack either or both of asparaginyl-tRNA or glutaminyl-tRNA synthetases. The reaction takes place in the presence of glutamine and ATP through an activated phospho-Asp-tRNA(Asn) or phospho-Glu-tRNA(Gln). In Rhodococcus opacus (strain B4), this protein is Aspartyl/glutamyl-tRNA(Asn/Gln) amidotransferase subunit C.